Reading from the N-terminus, the 400-residue chain is MSRATKVVLAYSGGVDTSVCIPYLKNEWGVKEVITLAADLGQGDELEGVRKKALDSGAVESLVIDVIEPLIKEYAFPAIQANALYENRYPLATALARPLIAKILVEAAEKYGADAIAHGCTGKGNDQVRFDVAIAALNPQIKILAPAREWGMSREETIAYGEEYGIPAPVKKSSPYSIDKNLLGMAIEAGELEDPWVEPPEEVYGMTKAIADTPNEPEYIEIGFERGIPVSLNGQEMGGIELITKLNQIAGNHGIGRIDMIENRLVGIKSREIYESPAMWVLIQGHRDLESLTLTADVTRYKRGIEETYSQLVYNGLWFSPLKGALDAFIQQTQERVTGVVRVKLFKGNAMVVGRKSDNSLYSFDLATYGAEDEFDHKAAEGFIYVWGLPTRVWSEKLRG.

ATP is bound by residues 10 to 18 (AYSGGVDTS) and A38. Residue Y89 coordinates L-citrulline. An ATP-binding site is contributed by G119. T121, N125, and D126 together coordinate L-aspartate. An L-citrulline-binding site is contributed by N125. 4 residues coordinate L-citrulline: R129, S177, E262, and Y274.

Belongs to the argininosuccinate synthase family. Type 1 subfamily. As to quaternary structure, homotetramer.

It is found in the cytoplasm. The enzyme catalyses L-citrulline + L-aspartate + ATP = 2-(N(omega)-L-arginino)succinate + AMP + diphosphate + H(+). The protein operates within amino-acid biosynthesis; L-arginine biosynthesis; L-arginine from L-ornithine and carbamoyl phosphate: step 2/3. The protein is Argininosuccinate synthase of Trichodesmium erythraeum (strain IMS101).